Here is a 219-residue protein sequence, read N- to C-terminus: MQFQTLLVVAGSLVASTLAVNSTVTEHHTTEITITHCSDNKCATSVAPAVQSVNTVTIEGVVTEYTTYCPLTASEHKHKESSSPSSVAPVASTESVVTTTISGVHTSYTTYCPLSGSSEASTVITPGTVAGESSSSSEEVSYVDVTSTPVVESTTDVELTLTAQSTLFTSYANSTGSSSSSSVVPSANVTTFEGGAVGGASNQITVGFAAIAGLAAILL.

An N-terminal signal peptide occupies residues 1–19 (MQFQTLLVVAGSLVASTLA). Residues asparagine 21, asparagine 173, and asparagine 188 are each glycosylated (N-linked (GlcNAc...) asparagine). A lipid anchor (GPI-anchor amidated glycine) is attached at glycine 194. The propeptide at 195–219 (GAVGGASNQITVGFAAIAGLAAILL) is removed in mature form.

It belongs to the flocculin family. In terms of processing, the GPI-anchor is attached to the protein in the endoplasmic reticulum and serves to target the protein to the cell surface. There, the glucosamine-inositol phospholipid moiety is cleaved off and the GPI-modified mannoprotein is covalently attached via its lipidless GPI glycan remnant to the 1,6-beta-glucan of the outer cell wall layer.

Its subcellular location is the secreted. It localises to the cell wall. The protein localises to the membrane. Its function is as follows. Probable cell wall protein that participates directly in adhesive cell-cell interactions. The polypeptide is Predicted GPI-anchored protein 6 (PGA6) (Candida albicans (strain SC5314 / ATCC MYA-2876) (Yeast)).